Here is a 404-residue protein sequence, read N- to C-terminus: Probable tRNA sulfurtransferase (404 aa).

In terms of domain architecture, THUMP spans 60-165 (TAVAESLKQV…EEAAYLSYET (106 aa)). Residues 183–184 (ML), 208–209 (HF), arginine 265, glycine 287, and glutamine 296 each bind ATP.

Belongs to the ThiI family.

The protein resides in the cytoplasm. The enzyme catalyses [ThiI sulfur-carrier protein]-S-sulfanyl-L-cysteine + a uridine in tRNA + 2 reduced [2Fe-2S]-[ferredoxin] + ATP + H(+) = [ThiI sulfur-carrier protein]-L-cysteine + a 4-thiouridine in tRNA + 2 oxidized [2Fe-2S]-[ferredoxin] + AMP + diphosphate. It catalyses the reaction [ThiS sulfur-carrier protein]-C-terminal Gly-Gly-AMP + S-sulfanyl-L-cysteinyl-[cysteine desulfurase] + AH2 = [ThiS sulfur-carrier protein]-C-terminal-Gly-aminoethanethioate + L-cysteinyl-[cysteine desulfurase] + A + AMP + 2 H(+). It functions in the pathway cofactor biosynthesis; thiamine diphosphate biosynthesis. Catalyzes the ATP-dependent transfer of a sulfur to tRNA to produce 4-thiouridine in position 8 of tRNAs, which functions as a near-UV photosensor. Also catalyzes the transfer of sulfur to the sulfur carrier protein ThiS, forming ThiS-thiocarboxylate. This is a step in the synthesis of thiazole, in the thiamine biosynthesis pathway. The sulfur is donated as persulfide by IscS. The polypeptide is Probable tRNA sulfurtransferase (Streptococcus pneumoniae (strain ATCC 700669 / Spain 23F-1)).